The primary structure comprises 288 residues: Bifunctional protein FolD (288 aa).

Residue 166-168 (GRS) participates in NADP(+) binding.

It belongs to the tetrahydrofolate dehydrogenase/cyclohydrolase family. In terms of assembly, homodimer.

It carries out the reaction (6R)-5,10-methylene-5,6,7,8-tetrahydrofolate + NADP(+) = (6R)-5,10-methenyltetrahydrofolate + NADPH. It catalyses the reaction (6R)-5,10-methenyltetrahydrofolate + H2O = (6R)-10-formyltetrahydrofolate + H(+). Its pathway is one-carbon metabolism; tetrahydrofolate interconversion. Its function is as follows. Catalyzes the oxidation of 5,10-methylenetetrahydrofolate to 5,10-methenyltetrahydrofolate and then the hydrolysis of 5,10-methenyltetrahydrofolate to 10-formyltetrahydrofolate. The protein is Bifunctional protein FolD of Levilactobacillus brevis (strain ATCC 367 / BCRC 12310 / CIP 105137 / JCM 1170 / LMG 11437 / NCIMB 947 / NCTC 947) (Lactobacillus brevis).